Consider the following 234-residue polypeptide: STARD3 N-terminal-like protein (234 aa).

Position 1 is an N-acetylmethionine (Met1). The Cytoplasmic segment spans residues Met1–Arg53. A phosphoserine mark is found at Ser15, Ser21, and Ser27. Residues Ile48–Ser218 form the MENTAL domain. Residues Thr54 to Leu74 form a helical membrane-spanning segment. At Asn75–Tyr97 the chain is on the extracellular side. The chain crosses the membrane as a helical span at residues Phe98–Cys118. Over Arg119–His122 the chain is Cytoplasmic. Residues Trp123–Leu143 form a helical membrane-spanning segment. Over Ser144 to Gly150 the chain is Extracellular. The helical transmembrane segment at Ala151–Leu171 threads the bilayer. Residues Asp172–Leu234 lie on the Cytoplasmic side of the membrane. Ser193 is modified (phosphoserine). The interval Pro200–Leu234 is disordered. Positions Phe208–Glu213 match the FFAT motif. Positions Lys224–Leu234 are enriched in basic and acidic residues.

It belongs to the STARD3 family. Homodimer. Interacts (via the MENTAL domain) with STARD3NL. Interacts (via FFAT motif) with VAPA. Interacts (via FFAT motif) with VAPB. Interacts (via FFAT motif) with MOSPD2 (via MSP domain).

The protein localises to the late endosome membrane. Its function is as follows. Tethering protein that creates contact site between the endoplasmic reticulum and late endosomes: localizes to late endosome membranes and contacts the endoplasmic reticulum via interaction with VAPA and VAPB. This Homo sapiens (Human) protein is STARD3 N-terminal-like protein.